Consider the following 56-residue polypeptide: Large ribosomal subunit protein bL32c (56 aa).

The protein belongs to the bacterial ribosomal protein bL32 family.

It is found in the plastid. It localises to the chloroplast. This is Large ribosomal subunit protein bL32c from Huperzia lucidula (Shining clubmoss).